Consider the following 354-residue polypeptide: COP9 signalosome complex subunit 5 (354 aa).

One can recognise an MPN domain in the interval 56–193; that stretch reads VLVSSIALVK…IGAFRTYPKD (138 aa). 3 residues coordinate Zn(2+): H139, H141, and D152. The short motif at 139–152 is the JAMM motif element; it reads HSHPGYGCWLSGID. The interval 193-212 is disordered; sequence DYKPPKKATKQNQDQSVPLS.

Belongs to the peptidase M67A family. CSN5 subfamily. Component of the COP9 signalosome (CSN) complex.

It is found in the cytoplasm. Its subcellular location is the nucleus. Functionally, catalytic Component of the COP9 signalosome (CSN) complex that acts as an regulator of the ubiquitin (Ubl) conjugation pathway by mediating the deneddylation of the cullin subunit of SCF-type E3 ubiquitin-protein ligase complexes. The polypeptide is COP9 signalosome complex subunit 5 (RRI1) (Yarrowia lipolytica (strain CLIB 122 / E 150) (Yeast)).